The sequence spans 4466 residues: Dynein beta chain, ciliary (4466 aa).

Residues 1–1813 form a stem region; sequence MGDVVDARLD…YANICDAQFK (1813 aa). Residue 154–161 participates in ATP binding; the sequence is AGQVKGKT. Coiled coils occupy residues 482–502, 627–643, 734–805, 1036–1056, 1306–1337, and 1443–1468; these read QEFL…DRRL, QKYE…EQKV, VLEV…WTKQ, TLDQ…EADE, WLEI…AWDA, and LLKS…MTSK. 4 AAA regions span residues 1814-2035, 2095-2316, 2422-2669, and 2767-3016; these read YSYE…VLVV, KVVK…IRFK, ELDP…VFQG, and TYNE…ERRY. Residues 1852 to 1859, 2133 to 2140, 2460 to 2467, and 2805 to 2812 contribute to the ATP site; these read GPAGTGKT, GNAGTGKS, GNAGLGKS, and GVGGSGKQ. Coiled-coil stretches lie at residues 3033 to 3134, 3263 to 3325, and 3573 to 3642; these read SLLA…AKAE, EPKR…SRTI, and QERP…EEAK. A stalk region spans residues 3033–3325; it reads SLLAMKSKEL…QEAEATSRTI (293 aa). AAA stretches follow at residues 3409 to 3636 and 3846 to 4072; these read LTDD…EISV and VRNF…VLYN.

Belongs to the dynein heavy chain family. Consists of at least two heavy chains (alpha and beta), three intermediate chains and several light chains.

It is found in the cell projection. Its subcellular location is the cilium. The protein resides in the flagellum. The protein localises to the cytoplasm. It localises to the cytoskeleton. It is found in the flagellum axoneme. Its function is as follows. Force generating protein of eukaryotic cilia and flagella. Produces force towards the minus ends of microtubules. Dynein has ATPase activity; the force-producing power stroke is thought to occur on release of ADP. This is Dynein beta chain, ciliary from Heliocidaris crassispina (Sea urchin).